The chain runs to 334 residues: MTTTVQNLKAEFGKVGVLFGGRSAEREVSLMSGKGVLAALQSKGVDAHAFDPAERSLAELAAEKFDRVFIALHGSYGEDGTLQGALEQLGIPYTGPGVMASAISMDKVMTKRVCLSHGVPTPRFTVLDAETTSAAQLQSVAAEFGLPLMLKAPHEGSTIGIAKVETAEGMQAGFDLCAKYEAVVLVEQFVKGRELTVPVIGSGRNARALPIVEIRAPQGNYDYEHKYFSNDTEYLCPAPFDEAFTKRVQALAVSAFNAVGCTGWSRVDFMVRASDNEPFLLEINTSPGMTSHSLVPMSAKVAGTGYEDLCIEILRSAKTELKPSSHMQLQEQER.

The ATP-grasp domain occupies 111 to 315 (KRVCLSHGVP…YEDLCIEILR (205 aa)). 141 to 196 (AAEFGLPLMLKAPHEGSTIGIAKVETAEGMQAGFDLCAKYEAVVLVEQFVKGRELT) serves as a coordination point for ATP. Mg(2+)-binding residues include aspartate 268, glutamate 282, and asparagine 284.

It belongs to the D-alanine--D-alanine ligase family. Mg(2+) is required as a cofactor. The cofactor is Mn(2+).

It is found in the cytoplasm. The catalysed reaction is 2 D-alanine + ATP = D-alanyl-D-alanine + ADP + phosphate + H(+). Its pathway is cell wall biogenesis; peptidoglycan biosynthesis. In terms of biological role, cell wall formation. The protein is D-alanine--D-alanine ligase of Herminiimonas arsenicoxydans.